The chain runs to 167 residues: Ubiquitin-fold modifier-conjugating enzyme 1 (167 aa).

Catalysis depends on Cys-116, which acts as the Glycyl thioester intermediate.

The protein belongs to the ubiquitin-conjugating enzyme family. UFC1 subfamily. As to quaternary structure, interacts with UBA5 (via C-terminus). Interacts with UFL1. Interacts with UFM1.

In terms of biological role, E2-like enzyme which specifically catalyzes the second step in ufmylation. Accepts the ubiquitin-like modifier UFM1 from the E1 enzyme UBA5 and forms an intermediate with UFM1 via a thioester linkage. Ufmylation is involved in various processes, such as ribosome recycling, response to DNA damage, interferon response or reticulophagy (also called ER-phagy). This is Ubiquitin-fold modifier-conjugating enzyme 1 from Salmo salar (Atlantic salmon).